A 348-amino-acid polypeptide reads, in one-letter code: Organic solute transporter alpha-like protein 3 (348 aa).

Residues 1-49 are Extracellular-facing; sequence MAKEHGAMRSVLNLIGSVMLPQDTSNCSDRHDTPSAPEFLSHLQPFQTV. An N-linked (GlcNAc...) asparagine glycan is attached at Asn26. Residues 50–70 traverse the membrane as a helical segment; it reads LLSIASFSTTIVLCLSLIHWF. At 71-84 the chain is on the cytoplasmic side; the sequence is YVYKYVSIEKRRNK. A helical transmembrane segment spans residues 85–105; that stretch reads LYWLIAVFPVACSCSFIAMCV. Residues 106 to 109 lie on the Extracellular side of the membrane; sequence PRTA. The helical transmembrane segment at 110–130 threads the bilayer; that stretch reads VILTCIGVLYYLMCLFVIVSL. Residues 131–180 lie on the Cytoplasmic side of the membrane; sequence ARHLFGGRESFSTCLQYDDRPIDFRSPPFCCIIPKLPTARSTEKNIRRLE. The helical transmembrane segment at 181-201 threads the bilayer; sequence WCVLQAPIVRSIIIFLDVVAV. The Extracellular segment spans residues 202–213; that stretch reads AEMREDATPYIR. Residues 214–234 form a helical membrane-spanning segment; it reads YSDMASLCSLLLAIFGVHTLA. Over 235–240 the chain is Cytoplasmic; it reads RVTSNK. A helical transmembrane segment spans residues 241–261; it reads LSAYCFMSMFRLVDISLLFFS. The Extracellular portion of the chain corresponds to 262-291; that stretch reads AQQPMIFQNVLLRFNLISCGPLLNAQENAY. A helical membrane pass occupies residues 292-312; the sequence is FVCNFIITCEMLLLSVLATWL. Topologically, residues 313-348 are cytoplasmic; sequence LAPRHNAMFDAYRPSMALSETTASLNETEQSMILDH.

Belongs to the OST-alpha family.

The protein resides in the cell membrane. Its function is as follows. Probable transporter. The sequence is that of Organic solute transporter alpha-like protein 3 (osta-3) from Caenorhabditis elegans.